A 107-amino-acid chain; its full sequence is Small ribosomal subunit protein bS6 (107 aa).

It belongs to the bacterial ribosomal protein bS6 family.

In terms of biological role, binds together with bS18 to 16S ribosomal RNA. In Synechococcus elongatus (strain ATCC 33912 / PCC 7942 / FACHB-805) (Anacystis nidulans R2), this protein is Small ribosomal subunit protein bS6.